Here is a 206-residue protein sequence, read N- to C-terminus: Ribosomal RNA large subunit methyltransferase E (206 aa).

S-adenosyl-L-methionine is bound by residues Gly60, Trp62, Asp80, Asp96, and Asp121. Lys161 serves as the catalytic Proton acceptor.

Belongs to the class I-like SAM-binding methyltransferase superfamily. RNA methyltransferase RlmE family.

It is found in the cytoplasm. The catalysed reaction is uridine(2552) in 23S rRNA + S-adenosyl-L-methionine = 2'-O-methyluridine(2552) in 23S rRNA + S-adenosyl-L-homocysteine + H(+). Specifically methylates the uridine in position 2552 of 23S rRNA at the 2'-O position of the ribose in the fully assembled 50S ribosomal subunit. This is Ribosomal RNA large subunit methyltransferase E from Nitrosospira multiformis (strain ATCC 25196 / NCIMB 11849 / C 71).